The primary structure comprises 2813 residues: von Willebrand factor (2813 aa).

The N-terminal stretch at 1 to 22 (MIPARFAGVLLALALILPGTLC) is a signal peptide. The 169-residue stretch at 33–201 (ARCSLFGSDF…ALSSGEQWCE (169 aa)) folds into the VWFD 1 domain. 2 disulfides stabilise this stretch: C35/C162 and C57/C200. Residues N99, N156, and N211 are each glycosylated (N-linked (GlcNAc...) asparagine). In terms of domain architecture, TIL 1 spans 295–348 (CPAGMEYRQCVSPCARTCQSLHINEMCQERCVDGCSCPEGQLLDEGLCVESTEC). A VWFD 2 domain is found at 386–560 (GECLVTGQSH…NAWKLHGDCQ (175 aa)). 3 cysteine pairs are disulfide-bonded: C388–C524, C410–C559, and C432–C440. TIL domains lie at 652–707 (CPKG…KAQC) and 776–827 (CPAD…LERC). A glycan (N-linked (GlcNAc...) asparagine) is linked at N666. The interval 764 to 787 (SLSCRPPMVKLVCPADNLRAEGLE) is amino-terminal. Disulfide bonds link C767–C808, C776–C804, and C810–C821. The segment at 788–833 (CTKTCQNYDLECMSMGCVSGCLCPPGMVRHENRCVALERCPCFHQG) is E1. The CX stretch occupies residues 826–853 (RCPCFHQGKEYAPGETVKIGCNTCVCQD). N857 carries N-linked (GlcNAc...) asparagine glycosylation. The 168-residue stretch at 865-1032 (ATCSTIGMAH…NSWKVSSQCA (168 aa)) folds into the VWFD 3 domain. 8 disulfides stabilise this stretch: C867-C996, C889-C1031, C898-C993, C914-C921, C1060-C1084, C1071-C1111, C1089-C1091, and C1126-C1130. Positions 1146–1196 (YNSCAPACQVTCQHPEPLACPVQCVEGCHAHCPPGKILDELLQTCVDPEDC) constitute a TIL 4 domain. N-linked (GlcNAc...) asparagine; atypical glycosylation is present at N1147. Cystine bridges form between C1149–C1169, C1153–C1165, and C1196–C1199. N-linked (GlcNAc...) asparagine glycosylation is present at N1231. Cysteines 1234 and 1237 form a disulfide. T1248, T1255, and T1256 each carry an O-linked (GalNAc...) threonine glycan. S1263 carries an O-linked (GalNAc...) serine glycan. C1272 and C1458 are joined by a disulfide. One can recognise a VWFA 1; binding site for platelet glycoprotein Ib domain in the interval 1277 to 1453 (DLVFLLDGSS…DELEQQRDEI (177 aa)). 2 O-linked (GalNAc...) threonine glycosylation sites follow: T1468 and T1477. An O-linked (GalNAc...) serine glycan is attached at S1486. The O-linked (GalNAc...) threonine glycan is linked to T1487. One can recognise a VWFA 2 domain in the interval 1498 to 1665 (DVAFVLEGSD…TLPREAPDLV (168 aa)). Residue N1515 is glycosylated (N-linked (GlcNAc...) (complex) asparagine). Residue N1574 is glycosylated (N-linked (GlcNAc...) asparagine). A disulfide bridge connects residues C1669 and C1670. T1679 is a glycosylation site (O-linked (GalNAc...) threonine). 7 disulfides stabilise this stretch: C1686-C1872, C1879-C1904, C1899-C1940, C1927-C2088, C1950-C2085, C1972-C2123, and C1993-C2001. The region spanning 1691 to 1871 (DVILLLDGSS…TLGNSFLHKL (181 aa)) is the VWFA 3; main binding site for collagens type I and III domain. The VWFD 4 domain occupies 1948 to 2124 (CVCTGSSTRH…TVQRPGQTCQ (177 aa)). Residues 2216 to 2261 (CPRHCDGNVSSCGDHPSEGCFCPPDKVMLEGSCVPEEACTQCIGED) form an E2 region. N2223 and N2290 each carry an N-linked (GlcNAc...) asparagine glycan. The VWFC 1 domain maps to 2255-2328 (TQCIGEDGVQ…CCPEYECVCD (74 aa)). A glycan (O-linked (GalNAc...) threonine) is linked at T2298. Residues N2357 and N2400 are each glycosylated (N-linked (GlcNAc...) asparagine). The 67-residue stretch at 2429–2495 (KVCVHRSTIY…HEGECCGRCL (67 aa)) folds into the VWFC 2 domain. A Cell attachment site motif is present at residues 2507 to 2509 (RGD). N-linked (GlcNAc...) asparagine glycosylation is found at N2546 and N2585. The VWFC 3 domain maps to 2580–2645 (EACMLNGTVI…NTGECCGRCL (66 aa)). 4 disulfide bridges follow: C2724–C2774, C2739–C2788, C2750–C2804, and C2754–C2806. A CTCK domain is found at 2724–2812 (CNDITARLQY…ECKCSPRKCS (89 aa)). N-linked (GlcNAc...) asparagine glycosylation occurs at N2790.

In terms of assembly, multimeric. Interacts with F8. In terms of processing, all cysteine residues are involved in intrachain or interchain disulfide bonds. Post-translationally, N- and O-glycosylated. In terms of tissue distribution, plasma.

It localises to the secreted. Its subcellular location is the extracellular space. The protein localises to the extracellular matrix. In terms of biological role, important in the maintenance of hemostasis, it promotes adhesion of platelets to the sites of vascular injury by forming a molecular bridge between sub-endothelial collagen matrix and platelet-surface receptor complex GPIb-IX-V. Also acts as a chaperone for coagulation factor VIII, delivering it to the site of injury, stabilizing its heterodimeric structure and protecting it from premature clearance from plasma. The sequence is that of von Willebrand factor (VWF) from Homo sapiens (Human).